Consider the following 508-residue polypeptide: Photosystem II CP47 reaction center protein (508 aa).

6 helical membrane-spanning segments follow: residues 21–36 (SVHI…WAGS), 101–115 (IVFS…IWHW), 140–156 (GIHL…FGAF), 203–218 (IAAG…FHLS), 237–252 (VLSS…AFVV), and 457–472 (SFAL…HGSR).

It belongs to the PsbB/PsbC family. PsbB subfamily. PSII is composed of 1 copy each of membrane proteins PsbA, PsbB, PsbC, PsbD, PsbE, PsbF, PsbH, PsbI, PsbJ, PsbK, PsbL, PsbM, PsbT, PsbX, PsbY, PsbZ, Psb30/Ycf12, at least 3 peripheral proteins of the oxygen-evolving complex and a large number of cofactors. It forms dimeric complexes. The cofactor is Binds multiple chlorophylls. PSII binds additional chlorophylls, carotenoids and specific lipids..

The protein resides in the plastid. Its subcellular location is the chloroplast thylakoid membrane. Functionally, one of the components of the core complex of photosystem II (PSII). It binds chlorophyll and helps catalyze the primary light-induced photochemical processes of PSII. PSII is a light-driven water:plastoquinone oxidoreductase, using light energy to abstract electrons from H(2)O, generating O(2) and a proton gradient subsequently used for ATP formation. In Helianthus annuus (Common sunflower), this protein is Photosystem II CP47 reaction center protein.